The primary structure comprises 1897 residues: Spectinabilin polyketide synthase system protein NorA (1897 aa).

The Ketosynthase family 3 (KS3) domain maps to 112 to 536 (EEPIAIVGMG…GTNAHIILEQ (425 aa)). Active-site for beta-ketoacyl synthase activity residues include C283, H418, and H458. Residues 538–563 (APEPERPHAPEADGEPRPLPWPVSGH) are disordered. The segment covering 540-553 (EPERPHAPEADGEP) has biased composition (basic and acidic residues). The 319-residue stretch at 644–962 (FVFPGQGSQW…VAEAHVHGVA (319 aa)) folds into the Malonyl-CoA:ACP transacylase (MAT) domain. Residues 1012–1139 (HPLLGAAIPL…GTLAPGGGHP (128 aa)) are N-terminal hotdog fold. In terms of domain architecture, PKS/mFAS DH spans 1012-1289 (HPLLGAAIPL…MRPVTAEALH (278 aa)). H1045 functions as the Proton acceptor; for dehydratase activity in the catalytic mechanism. Positions 1113 to 1152 (SRPEDAGADEPWTRHAEGTLAPGGGHPRQDPGPWPPTGAR) are disordered. The interval 1151 to 1289 (AREIDLDDCY…MRPVTAEALH (139 aa)) is C-terminal hotdog fold. D1211 (proton donor; for dehydratase activity) is an active-site residue. A Ketoreductase (KR) domain is found at 1494-1671 (GTVLVTGGLG…GVSMGWGMWA (178 aa)). The Carrier domain maps to 1777 to 1852 (ALLLGVVRGH…ALSRYLRTLL (76 aa)). S1812 carries the post-translational modification O-(pantetheine 4'-phosphoryl)serine. A disordered region spans residues 1854–1873 (PDPAPAPTAPDGQPGPDQAD). The span at 1862–1871 (APDGQPGPDQ) shows a compositional bias: low complexity.

The spectinabilin polyketide synthase complex is composed of 4 proteins, NorA, NorA', NorB and NorC. The complex comprises 6 modules with a total of 28 catalytic domains catalyzing 7 chain elongations. NorA comprises one module, NorA' two modules, NorB one module and NorC two modules. Pantetheine 4'-phosphate is required as a cofactor.

It catalyses the reaction 4-nitrobenzoyl-CoA + 6 (S)-methylmalonyl-CoA + malonyl-CoA + 6 NADPH + 12 H(+) = demethyldeoxyspectinabilin + 7 CO2 + 6 NADP(+) + 8 CoA + 5 H2O. It functions in the pathway antibiotic biosynthesis. The protein operates within polyketide biosynthesis. Functionally, component of a type I modular polyketide synthase (PKS) that generates the backbone of the antibiotic spectinabilin (also known as neoaureothin), a nitroaryl-substituted polyketide metabolite. This PKS system accepts the unusual starter unit 4-nitrobenzoyl-CoA and extends it by 6 molecules of (S)-methylmalonyl-CoA and a single molecule of malonyl-CoA. The first module, NorA, is used twice in an iterative fashion. The sequence is that of Spectinabilin polyketide synthase system protein NorA from Streptomyces orinoci (Streptoverticillium orinoci).